Consider the following 258-residue polypeptide: Ribosomal RNA large subunit methyltransferase E (258 aa).

Glycine 58, tryptophan 60, aspartate 78, aspartate 96, and aspartate 120 together coordinate S-adenosyl-L-methionine. Lysine 160 serves as the catalytic Proton acceptor.

The protein belongs to the class I-like SAM-binding methyltransferase superfamily. RNA methyltransferase RlmE family.

Its subcellular location is the cytoplasm. The catalysed reaction is uridine(2552) in 23S rRNA + S-adenosyl-L-methionine = 2'-O-methyluridine(2552) in 23S rRNA + S-adenosyl-L-homocysteine + H(+). Functionally, specifically methylates the uridine in position 2552 of 23S rRNA at the 2'-O position of the ribose in the fully assembled 50S ribosomal subunit. This chain is Ribosomal RNA large subunit methyltransferase E, found in Methanococcus maripaludis (strain DSM 14266 / JCM 13030 / NBRC 101832 / S2 / LL).